The chain runs to 117 residues: Large ribosomal subunit protein bL20c (117 aa).

The protein belongs to the bacterial ribosomal protein bL20 family.

The protein localises to the plastid. It is found in the chloroplast. Functionally, binds directly to 23S ribosomal RNA and is necessary for the in vitro assembly process of the 50S ribosomal subunit. It is not involved in the protein synthesizing functions of that subunit. The polypeptide is Large ribosomal subunit protein bL20c (Acorus calamus (Sweet flag)).